Consider the following 60-residue polypeptide: Short neurotoxin C (60 aa).

4 cysteine pairs are disulfide-bonded: C3–C22, C17–C39, C41–C52, and C53–C58.

This sequence belongs to the three-finger toxin family. Short-chain subfamily. Type I alpha-neurotoxin sub-subfamily. In terms of tissue distribution, expressed by the venom gland.

It localises to the secreted. Binds to muscle nicotinic acetylcholine receptor (nAChR) and inhibit acetylcholine from binding to the receptor, thereby impairing neuromuscular transmission. This Aipysurus laevis (Olive sea snake) protein is Short neurotoxin C.